The primary structure comprises 311 residues: Catechol 1,2-dioxygenase 1 (311 aa).

Positions 164, 200, 224, and 226 each coordinate Fe cation.

This sequence belongs to the intradiol ring-cleavage dioxygenase family. Homodimer. The cofactor is Fe(3+).

It catalyses the reaction catechol + O2 = cis,cis-muconate + 2 H(+). The protein operates within aromatic compound metabolism; beta-ketoadipate pathway; 5-oxo-4,5-dihydro-2-furylacetate from catechol: step 1/3. In terms of biological role, can cleave 4-methyl-, 4-chloro-, and 3-methoxycatechol at lower rates than catechol, but has no activity with 4-nitrocatechol or protocatechuic acid. In Acinetobacter lwoffii, this protein is Catechol 1,2-dioxygenase 1 (catA1).